Reading from the N-terminus, the 311-residue chain is Probable cobalamin biosynthesis protein CobD (311 aa).

A run of 4 helical transmembrane segments spans residues 53 to 73, 76 to 96, 157 to 177, and 288 to 308; these read FIFGTLTTISVLFIVFGAIYG, ILINNIQNIYIKYIVYSFLIS, DSIIAPLFYAIFFGLEGAFIY, and FSIDVVIFSFIVLYSIYYVIF.

This sequence belongs to the CobD/CbiB family.

The protein localises to the cell membrane. Its pathway is cofactor biosynthesis; adenosylcobalamin biosynthesis. Functionally, converts cobyric acid to cobinamide by the addition of aminopropanol on the F carboxylic group. The sequence is that of Probable cobalamin biosynthesis protein CobD from Methanococcus aeolicus (strain ATCC BAA-1280 / DSM 17508 / OCM 812 / Nankai-3).